Consider the following 341-residue polypeptide: 2-acylglycerol O-acyltransferase 3 (341 aa).

2 helical membrane-spanning segments follow: residues 29–49 (YVLT…VLLF) and 50–70 (TSLW…WDTP). N-linked (GlcNAc...) asparagine glycosylation is present at asparagine 126. Residues 137 to 157 (LFPGLRPWLAVLAGLFYLPVY) traverse the membrane as a helical segment.

It belongs to the diacylglycerol acyltransferase family. Post-translationally, ubiquitinated. Ubiquitination leads to proteasomal degradation. As to expression, selectively expressed in the digestive system. Highly expressed in the ileum, and at lower level in jejunum, duodenum, colon, cecum and the rectum. Not expressed in the stomach and the esophagus and trachea. Expressed at very low level in liver.

It localises to the endoplasmic reticulum membrane. It is found in the cytoplasm. The protein resides in the perinuclear region. It catalyses the reaction a 2-acylglycerol + an acyl-CoA = a 1,2-diacylglycerol + CoA. The catalysed reaction is an acyl-CoA + a 1,2-diacyl-sn-glycerol = a triacyl-sn-glycerol + CoA. The enzyme catalyses 2-(9Z-octadecenoyl)-glycerol + (9Z)-octadecenoyl-CoA = 1,2-di-(9Z-octadecenoyl)-sn-glycerol + CoA. It carries out the reaction 2-(9Z-octadecenoyl)-glycerol + hexadecanoyl-CoA = 1-hexadecanoyl-2-(9Z-octadecenoyl)-sn-glycerol + CoA. It catalyses the reaction 1,2-di-(9Z-octadecenoyl)-sn-glycerol + (9Z)-octadecenoyl-CoA = 1,2,3-tri-(9Z-octadecenoyl)-glycerol + CoA. The catalysed reaction is 1-hexadecanoyl-2-(9Z-octadecenoyl)-sn-glycerol + hexadecanoyl-CoA = 1,3-dihexadecanoyl-2-(9Z-octadecenoyl)glycerol + CoA. The enzyme catalyses all-trans-retinol + hexadecanoyl-CoA = all-trans-retinyl hexadecanoate + CoA. It carries out the reaction 1-O-(9Z-octadecenyl)-glycerol + (9Z)-octadecenoyl-CoA = 1-O-(9Z-octadecyl)-3-(9Z-octadecenoyl)-glycerol + CoA. It catalyses the reaction 1-O-(9Z-octadecyl)-3-(9Z-octadecenoyl)-glycerol + (9Z)-octadecenoyl-CoA = 1-O-(9Z-octadecenyl)-2,3-di-(9Z-octadecenoyl)glycerol + CoA. It participates in glycerolipid metabolism; triacylglycerol biosynthesis. Catalyzes the formation of diacylglycerol from 2-monoacylglycerol and fatty acyl-CoA. Also able to catalyze the terminal step in triacylglycerol synthesis by using diacylglycerol and fatty acyl-CoA as substrates. Has a preference toward palmitoyl-CoA and oleoyl-CoA. May be involved in absorption of dietary fat in the small intestine by catalyzing the resynthesis of triacylglycerol in enterocytes. Also able to use 1-monoalkylglycerol (1-MAkG) as an acyl acceptor for the synthesis of monoalkyl-monoacylglycerol (MAMAG). This is 2-acylglycerol O-acyltransferase 3 from Homo sapiens (Human).